We begin with the raw amino-acid sequence, 577 residues long: Galectin-3-binding protein (577 aa).

An N-terminal signal peptide occupies residues 1–18; that stretch reads MALLWLLSVFLLVPGTQG. Residues 24–124 enclose the SRCR domain; sequence MRLVNGASAN…HEKDAGVVCS (101 aa). Intrachain disulfides connect C49–C113, C62–C123, and C93–C103. Residue N69 is glycosylated (N-linked (GlcNAc...) asparagine). N125 carries N-linked (GlcNAc...) asparagine glycosylation. Residues 153–221 form the BTB domain; the sequence is CDLFIQVTGQ…FYSRRIEVSM (69 aa). The 101-residue stretch at 260–360 folds into the BACK domain; sequence PLDLYAYARA…MLPQELFELQ (101 aa). N-linked (GlcNAc...) asparagine glycans are attached at residues N362, N398, N543, and N572.

In terms of assembly, homodimers and homomultimers. The multimers form ring-like structures with a diameter of 30-40 nm. Binds LGALS1 and LGALS3. Binds ITGB1, COL4A1, COL5A1, COL6A1, FN1 and NID. Interacts with PPIC (in vitro). The unglycosylated form interacts with PDE4DIP isoform 2/MMG8/SMYLE; this interaction may connect a pericentrosomal complex to the gamma-tubulin ring complex (gamma-TuRC) to promote microtubule assembly and acetylation. In terms of processing, N-glycosylated. In terms of tissue distribution, detected in embryo, liver, spleen, kidney, lung, heart, intestine, thymus and lymph node.

The protein localises to the secreted. Its subcellular location is the extracellular space. It is found in the extracellular matrix. Its function is as follows. Promotes integrin-mediated cell adhesion. May stimulate host defense against viruses and tumor cells. The protein is Galectin-3-binding protein (Lgals3bp) of Mus musculus (Mouse).